The chain runs to 217 residues: Meiotic expression up-regulated protein 29 (217 aa).

Residues methionine 1–alanine 21 form the signal peptide. The Extracellular segment spans residues tyrosine 22–lysine 133. Asparagine 84 is a glycosylation site (N-linked (GlcNAc...) asparagine). The chain crosses the membrane as a helical span at residues leucine 134–alanine 154. The Cytoplasmic portion of the chain corresponds to threonine 155 to valine 217.

The protein localises to the membrane. This chain is Meiotic expression up-regulated protein 29 (meu29), found in Schizosaccharomyces pombe (strain 972 / ATCC 24843) (Fission yeast).